A 102-amino-acid chain; its full sequence is N(4)-acetylcytidine amidohydrolase (102 aa).

In terms of domain architecture, ASCH spans 6-93 (TFFSRFEQDI…IKEIYPGLDE (88 aa)). Lys20 functions as the Proton acceptor in the catalytic mechanism. The active-site Nucleophile is Thr23. Glu73 serves as the catalytic Proton donor.

It belongs to the N(4)-acetylcytidine amidohydrolase family.

The catalysed reaction is N(4)-acetylcytidine + H2O = cytidine + acetate + H(+). The enzyme catalyses N(4)-acetyl-2'-deoxycytidine + H2O = 2'-deoxycytidine + acetate + H(+). It catalyses the reaction N(4)-acetylcytosine + H2O = cytosine + acetate + H(+). Functionally, catalyzes the hydrolysis of N(4)-acetylcytidine (ac4C). In Serratia proteamaculans (strain 568), this protein is N(4)-acetylcytidine amidohydrolase.